Here is a 44-residue protein sequence, read N- to C-terminus: MNELTLIDFYLCFLAFLLFLVLIMLIIFWFSLEIQDLEEPCTKV.

A helical membrane pass occupies residues 9 to 29 (FYLCFLAFLLFLVLIMLIIFW).

The protein resides in the host membrane. The chain is Protein non-structural 7b from Homo sapiens (Human).